The chain runs to 389 residues: Inactive serine/threonine-protein kinase ZRK12 (389 aa).

The 302-residue stretch at 41–342 (SADEIRKATN…ETQFDSHQDI (302 aa)) folds into the Protein kinase domain. ATP-binding positions include 47 to 55 (KATNNFGVS) and Lys-84. At Tyr-129 the chain carries Phosphotyrosine. A Phosphothreonine modification is found at Thr-214. Tyr-222 carries the phosphotyrosine modification.

This sequence belongs to the protein kinase superfamily. Ser/Thr protein kinase family.

Together with RPP13L4/ZAR1, involved in the regulation of the ambient temperature-sensitive intersection of growth and immune response in the absence of pathogens. This is Inactive serine/threonine-protein kinase ZRK12 from Arabidopsis thaliana (Mouse-ear cress).